The chain runs to 83 residues: uncharacterized protein (83 aa).

2 helical membrane-spanning segments follow: residues 11 to 31 (FYCI…SFLL) and 48 to 68 (WHNL…HIWM).

It is found in the cell membrane. This is an uncharacterized protein from Bacillus subtilis (strain 168).